The following is a 400-amino-acid chain: Glutamyl-tRNA reductase (400 aa).

Substrate is bound by residues 45–48, serine 103, 108–110, and glutamine 114; these read TCNR and EDQ. The Nucleophile role is filled by cysteine 46. 179–184 lines the NADP(+) pocket; sequence GYGEIG.

Belongs to the glutamyl-tRNA reductase family. In terms of assembly, homodimer.

The enzyme catalyses (S)-4-amino-5-oxopentanoate + tRNA(Glu) + NADP(+) = L-glutamyl-tRNA(Glu) + NADPH + H(+). It participates in porphyrin-containing compound metabolism; protoporphyrin-IX biosynthesis; 5-aminolevulinate from L-glutamyl-tRNA(Glu): step 1/2. Functionally, catalyzes the NADPH-dependent reduction of glutamyl-tRNA(Glu) to glutamate 1-semialdehyde (GSA). This chain is Glutamyl-tRNA reductase, found in Clostridium perfringens (strain ATCC 13124 / DSM 756 / JCM 1290 / NCIMB 6125 / NCTC 8237 / Type A).